A 162-amino-acid polypeptide reads, in one-letter code: Disulfide bond formation protein B (162 aa).

The Cytoplasmic portion of the chain corresponds to 1–8; that stretch reads MTPLFRKA. The chain crosses the membrane as a helical span at residues 9–25; the sequence is VWLLFAVSVCAFAGSLA. At 26–43 the chain is on the periplasmic side; that stretch reads AQYVLGMEPCVLCISQRL. Cys35 and Cys38 are oxidised to a cystine. The helical transmembrane segment at 44 to 60 threads the bilayer; it reads CVLATALCTAIVLMCRP. Topologically, residues 61-67 are cytoplasmic; sequence RRRAGGL. Residues 68-85 traverse the membrane as a helical segment; it reads FGAVFISIPAVTGISVAA. Topologically, residues 86–141 are periplasmic; it reads YQLWLQSLPPGTAPSCGAPWTFRLKGWSLFDWFEPVVRGFGNCAEPDYLLGVALPV. Cys101 and Cys128 are joined by a disulfide. The chain crosses the membrane as a helical span at residues 142 to 160; that stretch reads WSAAYFLAVVLTVWWAWAR. Topologically, residues 161–162 are cytoplasmic; that stretch reads AK.

This sequence belongs to the DsbB family.

The protein resides in the cell inner membrane. Required for disulfide bond formation in some periplasmic proteins. Acts by oxidizing the DsbA protein. This is Disulfide bond formation protein B from Neisseria meningitidis serogroup C / serotype 2a (strain ATCC 700532 / DSM 15464 / FAM18).